Reading from the N-terminus, the 261-residue chain is Small ribosomal subunit protein eS4z (261 aa).

The S4 RNA-binding domain maps to 42–104 (LPLVLIIRNR…TNENFRLLYD (63 aa)).

This sequence belongs to the eukaryotic ribosomal protein eS4 family.

The protein localises to the cytoplasm. This Arabidopsis thaliana (Mouse-ear cress) protein is Small ribosomal subunit protein eS4z (RPS4A).